Reading from the N-terminus, the 379-residue chain is MSATLALTEQLIARASVTPDDQHCQQIMTERLAALGFECETIASHGVTNLWAVKRGTAGRDGKLLAFAGHTDVVPTGPLEQWTSPPFIPAHRDGKLYGRGAADMKTSLAAFIVASEEFVAAHPDHRGAIAFLITSDEEGPATDGTVKVVELLDARGEQLDYCIVGEPTSSAELGDVVKNGRRGSMSGELIVKGVQGHIAYPHLAKNPIHLLAPALAELAAEQWDAGNEYFPPTTWQVSNLRAGTGATNVIPGHADLMFNFRFSTASTVEGLQARVHAILDKHGLDYTLKWSVSGLPFLTPRGELSNALEHAIRAETGVTTELSTTGGTSDGRFIARICPQVIEFGPPNGSIHKIDEHIELRFVDPLKNVYRRVLEQLIA.

Zn(2+) is bound at residue H70. D72 is a catalytic residue. D103 provides a ligand contact to Zn(2+). E137 serves as the catalytic Proton acceptor. Positions 138, 166, and 352 each coordinate Zn(2+).

It belongs to the peptidase M20A family. DapE subfamily. In terms of assembly, homodimer. Zn(2+) serves as cofactor. The cofactor is Co(2+).

It catalyses the reaction N-succinyl-(2S,6S)-2,6-diaminopimelate + H2O = (2S,6S)-2,6-diaminopimelate + succinate. Its pathway is amino-acid biosynthesis; L-lysine biosynthesis via DAP pathway; LL-2,6-diaminopimelate from (S)-tetrahydrodipicolinate (succinylase route): step 3/3. In terms of biological role, catalyzes the hydrolysis of N-succinyl-L,L-diaminopimelic acid (SDAP), forming succinate and LL-2,6-diaminopimelate (DAP), an intermediate involved in the bacterial biosynthesis of lysine and meso-diaminopimelic acid, an essential component of bacterial cell walls. This is Succinyl-diaminopimelate desuccinylase from Burkholderia vietnamiensis (strain G4 / LMG 22486) (Burkholderia cepacia (strain R1808)).